The chain runs to 233 residues: Large ribosomal subunit protein uL1 (233 aa).

Belongs to the universal ribosomal protein uL1 family. Part of the 50S ribosomal subunit.

Functionally, binds directly to 23S rRNA. The L1 stalk is quite mobile in the ribosome, and is involved in E site tRNA release. Protein L1 is also a translational repressor protein, it controls the translation of the L11 operon by binding to its mRNA. In Shewanella denitrificans (strain OS217 / ATCC BAA-1090 / DSM 15013), this protein is Large ribosomal subunit protein uL1.